The sequence spans 395 residues: F-box only protein 7 (395 aa).

One can recognise an F-box domain in the interval Asn19 to Ile70.

The sequence is that of F-box only protein 7 (FBX7) from Arabidopsis thaliana (Mouse-ear cress).